Here is a 440-residue protein sequence, read N- to C-terminus: L-seryl-tRNA(Sec) selenium transferase (440 aa).

Lys282 is modified (N6-(pyridoxal phosphate)lysine).

The protein belongs to the SelA family. Pyridoxal 5'-phosphate serves as cofactor.

The protein resides in the cytoplasm. The enzyme catalyses L-seryl-tRNA(Sec) + selenophosphate + H(+) = L-selenocysteinyl-tRNA(Sec) + phosphate. It functions in the pathway aminoacyl-tRNA biosynthesis; selenocysteinyl-tRNA(Sec) biosynthesis; selenocysteinyl-tRNA(Sec) from L-seryl-tRNA(Sec) (bacterial route): step 1/1. Its function is as follows. Converts seryl-tRNA(Sec) to selenocysteinyl-tRNA(Sec) required for selenoprotein biosynthesis. The chain is L-seryl-tRNA(Sec) selenium transferase from Campylobacter jejuni subsp. jejuni serotype O:6 (strain 81116 / NCTC 11828).